Consider the following 878-residue polypeptide: Alanine--tRNA ligase (878 aa).

The Zn(2+) site is built by His571, His575, Cys673, and His677.

This sequence belongs to the class-II aminoacyl-tRNA synthetase family. Requires Zn(2+) as cofactor.

It is found in the cytoplasm. It catalyses the reaction tRNA(Ala) + L-alanine + ATP = L-alanyl-tRNA(Ala) + AMP + diphosphate. Catalyzes the attachment of alanine to tRNA(Ala) in a two-step reaction: alanine is first activated by ATP to form Ala-AMP and then transferred to the acceptor end of tRNA(Ala). Also edits incorrectly charged Ser-tRNA(Ala) and Gly-tRNA(Ala) via its editing domain. The chain is Alanine--tRNA ligase from Syntrophus aciditrophicus (strain SB).